A 246-amino-acid polypeptide reads, in one-letter code: tRNA (guanine-N(1)-)-methyltransferase (246 aa).

Residues Gly-114 and 133 to 138 (LGDYVL) each bind S-adenosyl-L-methionine.

It belongs to the RNA methyltransferase TrmD family. Homodimer.

The protein localises to the cytoplasm. It catalyses the reaction guanosine(37) in tRNA + S-adenosyl-L-methionine = N(1)-methylguanosine(37) in tRNA + S-adenosyl-L-homocysteine + H(+). Its function is as follows. Specifically methylates guanosine-37 in various tRNAs. The sequence is that of tRNA (guanine-N(1)-)-methyltransferase from Enterococcus faecalis (strain ATCC 700802 / V583).